We begin with the raw amino-acid sequence, 279 residues long: Thymidylate synthase (279 aa).

A dUMP-binding site is contributed by 133–134; it reads RR. Cys154 serves as the catalytic Nucleophile. DUMP is bound by residues 178–181, Asn189, and 219–221; these read RSND and HIY. Asp181 contacts (6R)-5,10-methylene-5,6,7,8-tetrahydrofolate. Ala278 is a (6R)-5,10-methylene-5,6,7,8-tetrahydrofolate binding site.

This sequence belongs to the thymidylate synthase family. Bacterial-type ThyA subfamily. As to quaternary structure, homodimer.

The protein resides in the cytoplasm. The enzyme catalyses dUMP + (6R)-5,10-methylene-5,6,7,8-tetrahydrofolate = 7,8-dihydrofolate + dTMP. It participates in pyrimidine metabolism; dTTP biosynthesis. In terms of biological role, catalyzes the reductive methylation of 2'-deoxyuridine-5'-monophosphate (dUMP) to 2'-deoxythymidine-5'-monophosphate (dTMP) while utilizing 5,10-methylenetetrahydrofolate (mTHF) as the methyl donor and reductant in the reaction, yielding dihydrofolate (DHF) as a by-product. This enzymatic reaction provides an intracellular de novo source of dTMP, an essential precursor for DNA biosynthesis. The chain is Thymidylate synthase from Streptococcus pyogenes serotype M12 (strain MGAS2096).